A 530-amino-acid chain; its full sequence is Autoinducer-2 kinase (530 aa).

Belongs to the FGGY kinase family.

The protein localises to the cytoplasm. It catalyses the reaction (S)-4,5-dihydroxypentane-2,3-dione + ATP = (2S)-2-hydroxy-3,4-dioxopentyl phosphate + ADP + H(+). In terms of biological role, catalyzes the phosphorylation of autoinducer-2 (AI-2) to phospho-AI-2, which subsequently inactivates the transcriptional regulator LsrR and leads to the transcription of the lsr operon. Phosphorylates the ring-open form of (S)-4,5-dihydroxypentane-2,3-dione (DPD), which is the precursor to all AI-2 signaling molecules, at the C5 position. This chain is Autoinducer-2 kinase, found in Photorhabdus laumondii subsp. laumondii (strain DSM 15139 / CIP 105565 / TT01) (Photorhabdus luminescens subsp. laumondii).